Reading from the N-terminus, the 175-residue chain is Anterior gradient protein 2 homolog (175 aa).

Residues 1–20 (MEKISVSAFLLLVALSYTLA) form the signal peptide. The tract at residues 21-40 (RDTTVKPAAKKDTKDSRPKL) is required to promote cell adhesion. 2 short sequence motifs (homodimer stabilization; interchain) span residues 45 to 54 (SRGWGDQLIW) and 60 to 67 (EALYKSKT).

The protein belongs to the AGR family. Monomer and homodimer. Interacts with LYPD3 and DAG1 (alphaDAG1). Interacts with MUC2; disulfide-linked.

Its subcellular location is the secreted. The protein resides in the endoplasmic reticulum. Required for MUC2 post-transcriptional synthesis and secretion. May play a role in the production of mucus by intestinal cells. Proto-oncogene that may play a role in cell migration, cell differentiation and cell growth. Promotes cell adhesion. In Pongo abelii (Sumatran orangutan), this protein is Anterior gradient protein 2 homolog (AGR2).